Reading from the N-terminus, the 184-residue chain is MQARDPHANVFFVGLMGAGKTTVGRAVARRLDRTFFDSDHEIEARTGARIPVIFEMEGEAGFRDRETQVITDLTQRENIVLATGGGAVLRPENRDCLKNNGIVVYLRANPHDLWLRTRKDKNRPLLQTEDPKGRLEALYEVRDPLYRECADFVIETGRPSVNGLVNMVLMQLELAGVIAKPLQA.

Position 17 to 22 (17 to 22) interacts with ATP; sequence GAGKTT. Thr-21 is a binding site for Mg(2+). The substrate site is built by Asp-39, Arg-63, and Gly-85. An ATP-binding site is contributed by Arg-123. Arg-142 is a binding site for substrate.

This sequence belongs to the shikimate kinase family. In terms of assembly, monomer. Mg(2+) is required as a cofactor.

It localises to the cytoplasm. It carries out the reaction shikimate + ATP = 3-phosphoshikimate + ADP + H(+). It functions in the pathway metabolic intermediate biosynthesis; chorismate biosynthesis; chorismate from D-erythrose 4-phosphate and phosphoenolpyruvate: step 5/7. Its function is as follows. Catalyzes the specific phosphorylation of the 3-hydroxyl group of shikimic acid using ATP as a cosubstrate. The sequence is that of Shikimate kinase from Burkholderia lata (strain ATCC 17760 / DSM 23089 / LMG 22485 / NCIMB 9086 / R18194 / 383).